A 554-amino-acid chain; its full sequence is Myo-inositol transporter 1 (554 aa).

Positions M1–T13 are enriched in polar residues. The tract at residues M1 to E57 is disordered. N-linked (GlcNAc...) asparagine glycans are attached at residues N6 and N22. Residues S15–S34 are compositionally biased toward low complexity. Polar residues predominate over residues N44–E57. 6 helical membrane-spanning segments follow: residues M65–G85, F110–A130, I144–A164, F167–L187, L196–W216, and V227–P247. The N-linked (GlcNAc...) asparagine glycan is linked to N279. A helical transmembrane segment spans residues G313–G332. N-linked (GlcNAc...) asparagine glycosylation is present at N351. 5 helical membrane passes run A354–I374, I382–H402, G420–I440, I459–F479, and G490–L510.

Belongs to the major facilitator superfamily. Sugar transporter (TC 2.A.1.1) family.

The protein localises to the cell membrane. The catalysed reaction is myo-inositol(out) + H(+)(out) = myo-inositol(in) + H(+)(in). Its function is as follows. Major transporter for myo-inositol. This chain is Myo-inositol transporter 1, found in Candida albicans (strain SC5314 / ATCC MYA-2876) (Yeast).